Reading from the N-terminus, the 318-residue chain is MTNFKLKIASRRSKLAMVQTLWVKDQLERNIPNLDVSIEAMATQGDKILDVALAKIGDKGLFTKELEAQMLVGHADIAVHSLKDLPTNLPNGLKLGCITKREDPADALVVSKKNDYYKLETLPEGSIVGTSSLRRLAQLRNKYPHLVFKDIRGNVITRIEKLDAGEFDCIILAAAGLKRLGFESRIHQIIPSEISLHAVGQGALGIECKSDDKKVLEIINVLEDKPTSQRCLAERAFLRELEGGCQVPIGVNSNIDNGQLYLTGMVASLDGKKLIKDQVIGNINNPELVGIELAKRLKLQGADKILSEIFEEFRENKN.

Position 245 is an S-(dipyrrolylmethanemethyl)cysteine (Cys245).

Belongs to the HMBS family. Monomer. Requires dipyrromethane as cofactor.

It catalyses the reaction 4 porphobilinogen + H2O = hydroxymethylbilane + 4 NH4(+). It functions in the pathway porphyrin-containing compound metabolism; protoporphyrin-IX biosynthesis; coproporphyrinogen-III from 5-aminolevulinate: step 2/4. The protein operates within porphyrin-containing compound metabolism; chlorophyll biosynthesis. Functionally, tetrapolymerization of the monopyrrole PBG into the hydroxymethylbilane pre-uroporphyrinogen in several discrete steps. The protein is Porphobilinogen deaminase of Prochlorococcus marinus (strain MIT 9215).